The sequence spans 175 residues: Ribosome maturation factor RimM (175 aa).

The region spanning 99 to 172 is the PRC barrel domain; it reads ADEYHVSDLI…RLEVDAPPGL (74 aa).

Belongs to the RimM family. As to quaternary structure, binds ribosomal protein uS19.

It localises to the cytoplasm. Its function is as follows. An accessory protein needed during the final step in the assembly of 30S ribosomal subunit, possibly for assembly of the head region. Essential for efficient processing of 16S rRNA. May be needed both before and after RbfA during the maturation of 16S rRNA. It has affinity for free ribosomal 30S subunits but not for 70S ribosomes. This chain is Ribosome maturation factor RimM, found in Picosynechococcus sp. (strain ATCC 27264 / PCC 7002 / PR-6) (Agmenellum quadruplicatum).